Here is a 329-residue protein sequence, read N- to C-terminus: Mitochondrial nuclease (329 aa).

H138 (proton acceptor) is an active-site residue. N170 contacts Mg(2+).

The protein belongs to the DNA/RNA non-specific endonuclease family. Homodimer. Mn(2+) is required as a cofactor. Requires Mg(2+) as cofactor.

It localises to the mitochondrion inner membrane. Its function is as follows. This enzyme has both RNase and DNase activity. The sequence is that of Mitochondrial nuclease (NUC1) from Saccharomyces cerevisiae (strain ATCC 204508 / S288c) (Baker's yeast).